A 129-amino-acid polypeptide reads, in one-letter code: uncharacterized protein (129 aa).

2 consecutive C2H2-type zinc fingers follow at residues 75 to 99 (FVCP…YTEH) and 101 to 124 (KVCP…CKKH).

Functionally, essential for virus function. This is an uncharacterized protein from Saccharolobus solfataricus (Sulfolobus solfataricus).